The primary structure comprises 550 residues: Chaperonin GroEL 1 (550 aa).

Residues 29 to 32 (TIGP), 86 to 90 (DGTTT), glycine 413, 477 to 479 (NAA), and aspartate 493 each bind ATP. Residues 524–550 (AVSDGDHGHSHGHGHSHGHSHPQGPGF) are disordered. A compositionally biased stretch (basic residues) spans 533–543 (SHGHGHSHGHS).

This sequence belongs to the chaperonin (HSP60) family. As to quaternary structure, forms a cylinder of 14 subunits composed of two heptameric rings stacked back-to-back. Interacts with the co-chaperonin GroES.

The protein localises to the cytoplasm. The catalysed reaction is ATP + H2O + a folded polypeptide = ADP + phosphate + an unfolded polypeptide.. In terms of biological role, together with its co-chaperonin GroES, plays an essential role in assisting protein folding. The GroEL-GroES system forms a nano-cage that allows encapsulation of the non-native substrate proteins and provides a physical environment optimized to promote and accelerate protein folding. The protein is Chaperonin GroEL 1 of Frankia alni (strain DSM 45986 / CECT 9034 / ACN14a).